Consider the following 737-residue polypeptide: MAKQVFQTTFAGRELIVETGQVAKQANGSVVVRYGESTVLTAAVMSKKMATGDFFPLQVNYEEKMYAAGKFPGGFMKREGRPSTDATLTARLIDRPIRPMFAEGFRNEVQVINTVLSYDENASAPMAAMFGSSLALSISDIPFDGPIAGVQVGYVDGQIIINPSQEQAEQSLLELTVAGTKHAINMVESGAKELSEEIMLEALLKGHEAVKELIAFQEEIVAAVGKEKAEVELLHVDAELQAEIIAAYNSDLQKAVQVEEKLAREAATQVVKDQVTAVYEEKYADHEEFDRIMRDVAEILEQMEHAEVRRLITEDKVRPDGRKVDEIRPLDAVVDFLPRVHGSGLFTRGQTQALSVLTLAPMGETQIIDGLDPEYKKRFMHHYNFPQYSVGETGRYGAPGRREIGHGALGERALAQVLPSLEEFPYAIRLVAEVLESNGSSSQASICAGTLALMAGGVPIKAPVAGIAMGLISDGNNYTVLTDIQGLEDHFGDMDFKVAGTRDGITALQMDIKIQGITAEILTEALAQAKKARFEILDVIEATIPEVRLELAPTAPKIDTIKIDVDKIKIVIGKGGETIDKIIAETGVKIDIDEEGNVSIYSSDQDAINRAKEIIAGLVREAKVDEVYRAKVVRIEKFGAFVNLFDKTDALVHISEMAWTRTNRVEDLVEIGDEVDVKVIKIDEKGRIDASMKALLPRPPKPEHDEKGEKSERPHRPRHHKDHKPKKEFTETPKDSE.

Residues aspartate 489 and aspartate 495 each contribute to the Mg(2+) site. The KH domain maps to 556 to 615 (PKIDTIKIDVDKIKIVIGKGGETIDKIIAETGVKIDIDEEGNVSIYSSDQDAINRAKEII). The region spanning 625–693 (DEVYRAKVVR…EKGRIDASMK (69 aa)) is the S1 motif domain. The tract at residues 691–737 (SMKALLPRPPKPEHDEKGEKSERPHRPRHHKDHKPKKEFTETPKDSE) is disordered. Basic and acidic residues predominate over residues 700 to 714 (PKPEHDEKGEKSERP). Residues 715 to 724 (HRPRHHKDHK) show a composition bias toward basic residues. Residues 725–737 (PKKEFTETPKDSE) are compositionally biased toward basic and acidic residues.

The protein belongs to the polyribonucleotide nucleotidyltransferase family. The cofactor is Mg(2+).

The protein localises to the cytoplasm. The enzyme catalyses RNA(n+1) + phosphate = RNA(n) + a ribonucleoside 5'-diphosphate. In terms of biological role, involved in mRNA degradation. Catalyzes the phosphorolysis of single-stranded polyribonucleotides processively in the 3'- to 5'-direction. The protein is Polyribonucleotide nucleotidyltransferase of Streptococcus pneumoniae serotype 19F (strain G54).